The primary structure comprises 380 residues: Protein FAM110B (380 aa).

A disordered region spans residues 92-272; the sequence is ALGSPTLKGF…RPSLQRSKSD (181 aa). The segment covering 100–110 has biased composition (gly residues); it reads GFGGGGGGAKS. Residues 127-138 are compositionally biased toward polar residues; the sequence is ILNSSEGSSTGS. The span at 153 to 162 shows a compositional bias: basic and acidic residues; it reads DAAELHRHSF. The span at 239–248 shows a compositional bias: low complexity; it reads KVAAPAAVKS. 2 positions are modified to phosphoserine: S248 and S311. Residues 327–347 form a disordered region; that stretch reads DCEQSQDSNSDLRNDDSANDR. The span at 336–345 shows a compositional bias: basic and acidic residues; the sequence is SDLRNDDSAN.

It belongs to the FAM110 family.

It localises to the cytoplasm. Its subcellular location is the cytoskeleton. The protein resides in the microtubule organizing center. It is found in the centrosome. The sequence is that of Protein FAM110B (FAM110B) from Bos taurus (Bovine).